A 130-amino-acid polypeptide reads, in one-letter code: MTTKLHAVVDAIGLPLRIKPTPGHYGDCPQASSLLSGLKGVGHVIADAAYDADHLRAFIASNLKATAQIKVNPTRSSVPTIDWRLYKERHQIECFFNKLKRYRRIALRCEKTLTAFMGFVHLACAMIWLR.

It belongs to the transposase 11 family.

Its function is as follows. Involved in the transposition of the insertion sequence. This is Putative transposase for insertion sequence element IS6501 from Brucella ovis (strain ATCC 25840 / 63/290 / NCTC 10512).